The sequence spans 734 residues: Origin of replication complex subunit 3 (734 aa).

Disordered stretches follow at residues 1–25 and 532–554; these read MAPS…SDTA and GQRQ…KLEK. Residues 12–24 are compositionally biased toward polar residues; the sequence is QCSTTDSFNSSDT.

Belongs to the ORC3 family. Component of the origin recognition complex (ORC) composed of at least ORC1 (ORC1A or ORC1B), ORC2, ORC3, ORC4, ORC5 and ORC6. ORC is regulated in a cell-cycle and development dependent manner. It is sequentially assembled at the exit from anaphase of mitosis and disassembled as cells enter S phase. Interacts directly with ORC1A, ORC2, ORC4, ORC5 and ORC6. In terms of tissue distribution, follow a cell-cycle regulation with a peak at the G1/S-phase. Mostly expressed in siliques and flowers, and, to a lower exent, in flower buds, leaves, roots and stems.

Its subcellular location is the nucleus. Its function is as follows. Component of the origin recognition complex (ORC) that binds origins of replication. DNA-binding is ATP-dependent. The specific DNA sequences that define origins of replication have not been identified yet. This chain is Origin of replication complex subunit 3, found in Arabidopsis thaliana (Mouse-ear cress).